A 791-amino-acid polypeptide reads, in one-letter code: Calcium-transporting ATPase CtpE (791 aa).

3 helical membrane passes run 53–73 (LFVI…LLII), 213–233 (ILQF…YTQL), and 252–272 (VPMV…VGVV). Aspartate 299 functions as the 4-aspartylphosphate intermediate in the catalytic mechanism. Positions 299, 301, and 530 each coordinate Mg(2+). A run of 6 helical transmembrane segments spans residues 596 to 616 (VYSV…KIFG), 627 to 647 (IHVT…LSLA), 664 to 684 (AALP…LVAY), 697 to 717 (ASTA…AVVA), 725 to 745 (VLLV…PLAQ), and 757 to 777 (VTSV…VLWW).

It belongs to the cation transport ATPase (P-type) (TC 3.A.3) family.

It localises to the cell membrane. It carries out the reaction Ca(2+)(in) + ATP + H2O = Ca(2+)(out) + ADP + phosphate + H(+). Its function is as follows. P-type ATPase involved in specific uptake of calcium. Essential for growth and maintenance of cell surface integrity under Ca(2+)-deficient conditions. The protein is Calcium-transporting ATPase CtpE of Mycolicibacterium smegmatis (strain ATCC 700084 / mc(2)155) (Mycobacterium smegmatis).